The chain runs to 269 residues: 2-dehydro-3-deoxyphosphooctonate aldolase (269 aa).

Belongs to the KdsA family.

The protein localises to the cytoplasm. The catalysed reaction is D-arabinose 5-phosphate + phosphoenolpyruvate + H2O = 3-deoxy-alpha-D-manno-2-octulosonate-8-phosphate + phosphate. It functions in the pathway carbohydrate biosynthesis; 3-deoxy-D-manno-octulosonate biosynthesis; 3-deoxy-D-manno-octulosonate from D-ribulose 5-phosphate: step 2/3. The protein operates within bacterial outer membrane biogenesis; lipopolysaccharide biosynthesis. This chain is 2-dehydro-3-deoxyphosphooctonate aldolase, found in Chlamydia trachomatis serovar A (strain ATCC VR-571B / DSM 19440 / HAR-13).